The following is a 407-amino-acid chain: Probable NADPH dehydrogenase (407 aa).

FMN is bound by residues Thr49 and Gln124. Tyr206 acts as the Proton donor in catalysis. Residues Arg254 and Arg357 each coordinate FMN.

This sequence belongs to the NADH:flavin oxidoreductase/NADH oxidase family. The cofactor is FMN.

The catalysed reaction is A + NADPH + H(+) = AH2 + NADP(+). Functionally, oxidoreductase that binds mammalian estrogens with high affinity. This chain is Probable NADPH dehydrogenase, found in Candida albicans (strain SC5314 / ATCC MYA-2876) (Yeast).